The following is an 818-amino-acid chain: Protein Cep78 homolog (818 aa).

Disordered regions lie at residues 513 to 589, 691 to 748, and 768 to 798; these read LDVE…HEFA, RQAN…TEAT, and KQSESMSLTEEAGDGDAGGGGGSGDFGDQNV. Over residues 514 to 539 the composition is skewed to acidic residues; that stretch reads DVEEEEEEEEEEQQAEESQSESEPQN. Over residues 561–589 the composition is skewed to basic and acidic residues; it reads VRSEIKYVENNPKEAAKKNRESKSDHEFA. Over residues 782–792 the composition is skewed to gly residues; sequence GDAGGGGGSGD.

This sequence belongs to the CEP78 family.

Its subcellular location is the cytoplasm. The protein localises to the cytoskeleton. The protein resides in the microtubule organizing center. It localises to the centrosome. It is found in the centriole. Its subcellular location is the cilium basal body. In terms of biological role, may play a role in cilium biogenesis. The sequence is that of Protein Cep78 homolog from Drosophila melanogaster (Fruit fly).